The following is a 177-amino-acid chain: O-acetyl-ADP-ribose deacetylase (177 aa).

Residues 1-175 (MKTRIHVVQG…LYERLLTQQG (175 aa)) enclose the Macro domain. Substrate-binding positions include 11 to 12 (DI), Asn-25, 33 to 35 (GVD), and 122 to 126 (STGVY). Asp-35 functions as the Proton acceptor in the catalytic mechanism.

The protein belongs to the MacroD-type family. YmdB subfamily. In terms of assembly, homodimer. Interacts with RNase III.

The enzyme catalyses 3''-O-acetyl-ADP-D-ribose + H2O = ADP-D-ribose + acetate + H(+). It carries out the reaction 2''-O-acetyl-ADP-D-ribose + H2O = ADP-D-ribose + acetate + H(+). In terms of biological role, deacetylates O-acetyl-ADP ribose to yield ADP-ribose and free acetate. Down-regulates ribonuclease 3 (RNase III) activity. Acts by interacting directly with the region of the ribonuclease that is required for dimerization/activation. The protein is O-acetyl-ADP-ribose deacetylase of Shigella flexneri serotype 5b (strain 8401).